Reading from the N-terminus, the 471-residue chain is Glutamate--tRNA ligase (471 aa).

The 'HIGH' region motif lies at 9-19 (PSPTGYLHVGG). Zn(2+) is bound by residues cysteine 98, cysteine 100, cysteine 125, and histidine 127. Positions 237–241 (KLSKR) match the 'KMSKS' region motif. Lysine 240 provides a ligand contact to ATP.

Belongs to the class-I aminoacyl-tRNA synthetase family. Glutamate--tRNA ligase type 1 subfamily. In terms of assembly, monomer. Requires Zn(2+) as cofactor.

It is found in the cytoplasm. It carries out the reaction tRNA(Glu) + L-glutamate + ATP = L-glutamyl-tRNA(Glu) + AMP + diphosphate. In terms of biological role, catalyzes the attachment of glutamate to tRNA(Glu) in a two-step reaction: glutamate is first activated by ATP to form Glu-AMP and then transferred to the acceptor end of tRNA(Glu). The polypeptide is Glutamate--tRNA ligase (Shigella dysenteriae serotype 1 (strain Sd197)).